The primary structure comprises 176 residues: Cytochrome b (176 aa).

A run of 3 helical transmembrane segments spans residues 33–53 (FGSLLGICLTIQILTGLFLAM), 77–98 (WLLRYLHANGASMFFICLYLHV), and 113–133 (WNMGIILLFAVMATAFMGYVL). Residues histidine 83 and histidine 97 each coordinate heme b.

This sequence belongs to the cytochrome b family. The cytochrome bc1 complex contains 11 subunits: 3 respiratory subunits (MT-CYB, CYC1 and UQCRFS1), 2 core proteins (UQCRC1 and UQCRC2) and 6 low-molecular weight proteins (UQCRH/QCR6, UQCRB/QCR7, UQCRQ/QCR8, UQCR10/QCR9, UQCR11/QCR10 and a cleavage product of UQCRFS1). This cytochrome bc1 complex then forms a dimer. It depends on heme b as a cofactor.

Its subcellular location is the mitochondrion inner membrane. Its function is as follows. Component of the ubiquinol-cytochrome c reductase complex (complex III or cytochrome b-c1 complex) that is part of the mitochondrial respiratory chain. The b-c1 complex mediates electron transfer from ubiquinol to cytochrome c. Contributes to the generation of a proton gradient across the mitochondrial membrane that is then used for ATP synthesis. This is Cytochrome b (MT-CYB) from Tomopeas ravum (Blunt-eared bat).